The following is a 527-amino-acid chain: Bifunctional purine biosynthesis protein PurH (527 aa).

Positions N9–V156 constitute an MGS-like domain.

Belongs to the PurH family.

The catalysed reaction is (6R)-10-formyltetrahydrofolate + 5-amino-1-(5-phospho-beta-D-ribosyl)imidazole-4-carboxamide = 5-formamido-1-(5-phospho-D-ribosyl)imidazole-4-carboxamide + (6S)-5,6,7,8-tetrahydrofolate. It catalyses the reaction IMP + H2O = 5-formamido-1-(5-phospho-D-ribosyl)imidazole-4-carboxamide. Its pathway is purine metabolism; IMP biosynthesis via de novo pathway; 5-formamido-1-(5-phospho-D-ribosyl)imidazole-4-carboxamide from 5-amino-1-(5-phospho-D-ribosyl)imidazole-4-carboxamide (10-formyl THF route): step 1/1. It participates in purine metabolism; IMP biosynthesis via de novo pathway; IMP from 5-formamido-1-(5-phospho-D-ribosyl)imidazole-4-carboxamide: step 1/1. This chain is Bifunctional purine biosynthesis protein PurH, found in Mycolicibacterium paratuberculosis (strain ATCC BAA-968 / K-10) (Mycobacterium paratuberculosis).